The chain runs to 253 residues: Flap endonuclease Xni (253 aa).

Asp-105 serves as a coordination point for Mg(2+). The 90-residue stretch at 162–251 (ERHQLLDYIA…HLKLSDLRVN (90 aa)) folds into the 5'-3' exonuclease domain. Leu-172, Pro-181, Ile-183, and Ile-186 together coordinate K(+). Residues 185–190 (GIGPKS) are interaction with DNA.

This sequence belongs to the Xni family. The cofactor is Mg(2+). Requires K(+) as cofactor.

Its function is as follows. Has flap endonuclease activity. During DNA replication, flap endonucleases cleave the 5'-overhanging flap structure that is generated by displacement synthesis when DNA polymerase encounters the 5'-end of a downstream Okazaki fragment. The protein is Flap endonuclease Xni of Shewanella amazonensis (strain ATCC BAA-1098 / SB2B).